Consider the following 439-residue polypeptide: Ribulose bisphosphate carboxylase/oxygenase activase, chloroplastic (439 aa).

167–174 serves as a coordination point for ATP; it reads GGKGQGKS.

Belongs to the RuBisCO activase family.

Its subcellular location is the plastid. The protein resides in the chloroplast stroma. Activation of RuBisCO (ribulose-1,5-bisphosphate carboxylase/oxygenase; EC 4.1.1.39) involves the ATP-dependent carboxylation of the epsilon-amino group of lysine leading to a carbamate structure. The chain is Ribulose bisphosphate carboxylase/oxygenase activase, chloroplastic (RCA) from Vigna radiata var. radiata (Mung bean).